A 150-amino-acid chain; its full sequence is FCS-Like Zinc finger 15 (150 aa).

A compositionally biased stretch (low complexity) spans 12–28; that stretch reads NNNNNNNNNNNNNNNKN. The tract at residues 12–31 is disordered; sequence NNNNNNNNNNNNNNNKNPLS. The FLZ-type zinc finger occupies 67–111; the sequence is GFLEHCFLCRRKLLPAKDIYMYKGDRAFCSVECRSKQMIMDEEES. Positions 129–150 are disordered; sequence SPATAPSRYRRDPRNQAGGFAY.

The protein belongs to the FLZ family. In terms of assembly, interacts with KIN10 and KIN11 via its FLZ-type zinc finger domain. Interacts with KINB1 and KINB3 via its N-terminal part. Forms homodimer and heterodimer with FLZ1, FLZ2 and FLZ7 in vitro.

The protein resides in the cytoplasm. It is found in the P-body. May act as an adapter to facilitate the interaction of SnRK1 complex with effector proteins, conferring tissue- and stimulus-type specific differences in the SnRK1 regulation pathway. This chain is FCS-Like Zinc finger 15, found in Arabidopsis thaliana (Mouse-ear cress).